The chain runs to 142 residues: Hemoglobin subunit alpha 1 (142 aa).

The residue at position 1 (serine 1) is an N-acetylserine. Residues 1–142 (SLSDKDKAAV…VSLALSERYR (142 aa)) form the Globin domain. O2 is bound at residue histidine 59. Histidine 88 is a binding site for heme b.

It belongs to the globin family. As to quaternary structure, hb1 is a heterotetramer of two alpha-1 chains and two beta-1 chains. Hb2 is a heterotetramer of two alpha-2 chains and two beta-1 chains. HbC is a heterotetramer of two alpha-1 chains and two beta-2 chains. In terms of tissue distribution, red blood cells.

Functionally, involved in oxygen transport from gills to the various peripheral tissues. In Eleginops maclovinus (Patagonian blennie), this protein is Hemoglobin subunit alpha 1.